A 415-amino-acid chain; its full sequence is uncharacterized protein (415 aa).

A run of 10 helical transmembrane segments spans residues 20-40, 43-63, 78-98, 109-129, 155-175, 243-263, 300-320, 328-348, 360-380, and 388-408; these read MAYLFYFITAFLLGTEAFGIL, LMPIADTLTIFFSSGIPPAIA, IPILYLMILLSVVGFILTPYI, LPNILYFAVGLCVVASTVIAF, VILVFILTLYLGIFGSLLSIS, IVIMSIMGGFWSGIYGYSSLI, IFSSIFVIGCLFFPEIPLIAF, GILCLRILAISSLFMSYYTLI, ISFYIILFGLVLNIILNLILV, and GSLATLITSISVFLIGVFAIL.

It belongs to the polysaccharide synthase family.

It is found in the cell membrane. This is an uncharacterized protein from Methanocaldococcus jannaschii (strain ATCC 43067 / DSM 2661 / JAL-1 / JCM 10045 / NBRC 100440) (Methanococcus jannaschii).